Consider the following 233-residue polypeptide: Ribosomal RNA large subunit methyltransferase E (233 aa).

The S-adenosyl-L-methionine site is built by Gly80, Trp82, Asp108, Asp124, and Asp148. The Proton acceptor role is filled by Lys188.

The protein belongs to the class I-like SAM-binding methyltransferase superfamily. RNA methyltransferase RlmE family.

The protein localises to the cytoplasm. It carries out the reaction uridine(2552) in 23S rRNA + S-adenosyl-L-methionine = 2'-O-methyluridine(2552) in 23S rRNA + S-adenosyl-L-homocysteine + H(+). Specifically methylates the uridine in position 2552 of 23S rRNA at the 2'-O position of the ribose in the fully assembled 50S ribosomal subunit. The sequence is that of Ribosomal RNA large subunit methyltransferase E from Ruegeria pomeroyi (strain ATCC 700808 / DSM 15171 / DSS-3) (Silicibacter pomeroyi).